The following is a 172-amino-acid chain: NADH dehydrogenase [ubiquinone] 1 alpha subcomplex subunit 8 (172 aa).

2 CHCH domains span residues 33 to 74 (GAQC…FRQI) and 75 to 118 (KRHC…LGWV). 4 consecutive short sequence motifs (cx9C motif) follow at residues 36 to 46 (CDKPNKEFMLC), 56 to 66 (CLEEGKLVNKC), 78 to 88 (CAEPFTEYWTC), and 100 to 110 (CRKQQAKFDEC). Disulfide bonds link cysteine 36/cysteine 66, cysteine 46/cysteine 56, cysteine 78/cysteine 110, and cysteine 88/cysteine 100. Residues 133–164 (TDRPLPENPYHSRPRPDPSPEIEGDLQPATHG) form a disordered region.

Belongs to the complex I NDUFA8 subunit family. Complex I is composed of 45 different subunits. In terms of processing, may contain intrachain disulfide bonds, as evidenced by its electrophoretic mobility under reducing vs non-reducing conditions.

The protein localises to the mitochondrion inner membrane. Its subcellular location is the mitochondrion intermembrane space. The protein resides in the mitochondrion. Accessory subunit of the mitochondrial membrane respiratory chain NADH dehydrogenase (Complex I), that is believed not to be involved in catalysis. Complex I functions in the transfer of electrons from NADH to the respiratory chain. The immediate electron acceptor for the enzyme is believed to be ubiquinone. The protein is NADH dehydrogenase [ubiquinone] 1 alpha subcomplex subunit 8 (NDUFA8) of Homo sapiens (Human).